The following is a 158-amino-acid chain: Large ribosomal subunit protein uL15 (158 aa).

Residues 1–13 (MKLNEIKDNEGST) show a composition bias toward basic and acidic residues. The segment at 1 to 45 (MKLNEIKDNEGSTHSRKRLGRGIGSGSGKTGGRGVKGQKSRSGVA) is disordered. Over residues 21–35 (RGIGSGSGKTGGRGV) the composition is skewed to gly residues.

The protein belongs to the universal ribosomal protein uL15 family. In terms of assembly, part of the 50S ribosomal subunit.

Binds to the 23S rRNA. The protein is Large ribosomal subunit protein uL15 of Rhizobium etli (strain CIAT 652).